Reading from the N-terminus, the 232-residue chain is 7-cyano-7-deazaguanine synthase (232 aa).

7–17 (CSGGLDSVSLA) contributes to the ATP binding site. Positions 185, 193, 196, and 199 each coordinate Zn(2+).

It belongs to the QueC family. The cofactor is Zn(2+).

The enzyme catalyses 7-carboxy-7-deazaguanine + NH4(+) + ATP = 7-cyano-7-deazaguanine + ADP + phosphate + H2O + H(+). Its pathway is purine metabolism; 7-cyano-7-deazaguanine biosynthesis. Functionally, catalyzes the ATP-dependent conversion of 7-carboxy-7-deazaguanine (CDG) to 7-cyano-7-deazaguanine (preQ(0)). The chain is 7-cyano-7-deazaguanine synthase from Brucella canis (strain ATCC 23365 / NCTC 10854 / RM-666).